Consider the following 610-residue polypeptide: DNA replication regulator sld2 (610 aa).

Over residues 28–42 (WAQKNDGKKPSREAI) the composition is skewed to basic and acidic residues. Disordered stretches follow at residues 28 to 115 (WAQK…AVHE), 127 to 261 (SPAV…ERSV), and 338 to 610 (EQGG…RRRR). Polar residues-rich tracts occupy residues 86–110 (ETSL…SQHY) and 232–261 (TKTS…ERSV). Composition is skewed to acidic residues over residues 373–386 (VPEE…DEAA) and 414–428 (FDDE…EEDL). Basic residues predominate over residues 442 to 464 (VFKKKGQKRTTRKVNMRPTRTKR). Residues 470-480 (AEEEDDGEEEH) show a composition bias toward acidic residues. Over residues 493 to 503 (KNLDGDDHHTL) the composition is skewed to basic and acidic residues. The span at 514–527 (EFDDGSEGEDEEAE) shows a compositional bias: acidic residues. Residues 544-573 (SAKEKTKKDATTETKKKKGTKEGGDEEPAK) show a composition bias toward basic and acidic residues.

The protein belongs to the SLD2 family.

Its subcellular location is the cytoplasm. The protein localises to the nucleus. In terms of biological role, has a role in the initiation of DNA replication. Required at S-phase checkpoint. The sequence is that of DNA replication regulator sld2 (drc-4) from Neurospora crassa (strain ATCC 24698 / 74-OR23-1A / CBS 708.71 / DSM 1257 / FGSC 987).